The sequence spans 276 residues: Pyrroline-5-carboxylate reductase (276 aa).

This sequence belongs to the pyrroline-5-carboxylate reductase family.

It localises to the cytoplasm. The catalysed reaction is L-proline + NADP(+) = (S)-1-pyrroline-5-carboxylate + NADPH + 2 H(+). It catalyses the reaction L-proline + NAD(+) = (S)-1-pyrroline-5-carboxylate + NADH + 2 H(+). Its pathway is amino-acid biosynthesis; L-proline biosynthesis; L-proline from L-glutamate 5-semialdehyde: step 1/1. The chain is Pyrroline-5-carboxylate reductase (PROC1) from Arabidopsis thaliana (Mouse-ear cress).